The sequence spans 286 residues: UPF0725 protein At2g20620 (286 aa).

Residues 1 to 49 (MVLETPVCSPIDKESSSDDVQLNKPPKKKRKLDVVYPPRDNTSSSSDVK) are disordered.

Belongs to the UPF0725 (EMB2204) family.

The chain is UPF0725 protein At2g20620 from Arabidopsis thaliana (Mouse-ear cress).